The sequence spans 287 residues: Mu-like prophage FluMu DNA transposition protein B (287 aa).

Residues 7-62 form the HTH cro/C1-type domain; sequence LKQHLSDSQITQAQLAREAGVNAGALSAYLNDNYKGNIADVEAKLAAYLEKKAVQA. Positions 18-37 form a DNA-binding region, H-T-H motif; sequence QAQLAREAGVNAGALSAYLN. Position 98–105 (98–105) interacts with ATP; it reads GMSGVGKT.

Functionally, this protein is a non-specific DNA-binding and ATP-hydrolyzing protein essential for bacteriophage integration and replication. The protein is Mu-like prophage FluMu DNA transposition protein B of Haemophilus influenzae (strain ATCC 51907 / DSM 11121 / KW20 / Rd).